Consider the following 467-residue polypeptide: Methylenetetrahydrofolate--tRNA-(uracil-5-)-methyltransferase TrmFO (467 aa).

11–16 lines the FAD pocket; the sequence is GAGLAG.

The protein belongs to the MnmG family. TrmFO subfamily. The cofactor is FAD.

The protein resides in the cytoplasm. The enzyme catalyses uridine(54) in tRNA + (6R)-5,10-methylene-5,6,7,8-tetrahydrofolate + NADH + H(+) = 5-methyluridine(54) in tRNA + (6S)-5,6,7,8-tetrahydrofolate + NAD(+). The catalysed reaction is uridine(54) in tRNA + (6R)-5,10-methylene-5,6,7,8-tetrahydrofolate + NADPH + H(+) = 5-methyluridine(54) in tRNA + (6S)-5,6,7,8-tetrahydrofolate + NADP(+). In terms of biological role, catalyzes the folate-dependent formation of 5-methyl-uridine at position 54 (M-5-U54) in all tRNAs. The protein is Methylenetetrahydrofolate--tRNA-(uracil-5-)-methyltransferase TrmFO of Prochlorococcus marinus (strain NATL2A).